The chain runs to 565 residues: Periplasmic trehalase (565 aa).

The signal sequence occupies residues 1-30 (MKSPAPSRPQKMALIPACIFLCFAALSVQA). Residues Arg152, 159 to 160 (WD), Asn196, 205 to 207 (RSQ), 277 to 279 (RPE), and Gly310 each bind substrate. Residues Asp312 and Glu496 each act as proton donor/acceptor in the active site. Residue Glu511 participates in substrate binding. The interval 539–565 (CDNVPATRPLSESTTQPLKQKEAEPTP) is disordered.

Belongs to the glycosyl hydrolase 37 family. In terms of assembly, monomer.

The protein localises to the periplasm. The catalysed reaction is alpha,alpha-trehalose + H2O = alpha-D-glucose + beta-D-glucose. In terms of biological role, provides the cells with the ability to utilize trehalose at high osmolarity by splitting it into glucose molecules that can subsequently be taken up by the phosphotransferase-mediated uptake system. The chain is Periplasmic trehalase from Escherichia coli O45:K1 (strain S88 / ExPEC).